A 117-amino-acid chain; its full sequence is Photosystem II reaction center Psb28 protein (117 aa).

Belongs to the Psb28 family. In terms of assembly, part of the photosystem II complex.

The protein resides in the cellular thylakoid membrane. The polypeptide is Photosystem II reaction center Psb28 protein (Prochlorococcus marinus (strain AS9601)).